The primary structure comprises 556 residues: Formate--tetrahydrofolate ligase (556 aa).

Residue 65–72 (TPAGEGKS) coordinates ATP.

The protein belongs to the formate--tetrahydrofolate ligase family.

The catalysed reaction is (6S)-5,6,7,8-tetrahydrofolate + formate + ATP = (6R)-10-formyltetrahydrofolate + ADP + phosphate. The protein operates within one-carbon metabolism; tetrahydrofolate interconversion. The protein is Formate--tetrahydrofolate ligase of Streptococcus equi subsp. zooepidemicus (strain MGCS10565).